We begin with the raw amino-acid sequence, 524 residues long: Chromosomal replication initiator protein DnaA (524 aa).

Residues 1–105 are domain I, interacts with DnaA modulators; sequence MSQNSSSLLE…EQEIPETPAQ (105 aa). The interval 95-183 is disordered; it reads PEQEIPETPA…PAHNPNREVS (89 aa). The tract at residues 106–182 is domain II; it reads QEFKYQPDAP…TPAHNPNREV (77 aa). Positions 148–158 are enriched in pro residues; the sequence is APEPHPAPIAD. The interval 183–399 is domain III, AAA+ region; the sequence is SLNPKYTFES…GALIRVSAYS (217 aa). Positions 227, 229, 230, and 231 each coordinate ATP. The tract at residues 400 to 524 is domain IV, binds dsDNA; it reads SLINQPIDKE…TQLIKSRGRN (125 aa).

This sequence belongs to the DnaA family. Oligomerizes as a right-handed, spiral filament on DNA at oriC.

Its subcellular location is the cytoplasm. Its function is as follows. Plays an essential role in the initiation and regulation of chromosomal replication. ATP-DnaA binds to the origin of replication (oriC) to initiate formation of the DNA replication initiation complex once per cell cycle. Binds the DnaA box (a 9 base pair repeat at the origin) and separates the double-stranded (ds)DNA. Forms a right-handed helical filament on oriC DNA; dsDNA binds to the exterior of the filament while single-stranded (ss)DNA is stabiized in the filament's interior. The ATP-DnaA-oriC complex binds and stabilizes one strand of the AT-rich DNA unwinding element (DUE), permitting loading of DNA polymerase. After initiation quickly degrades to an ADP-DnaA complex that is not apt for DNA replication. Binds acidic phospholipids. This chain is Chromosomal replication initiator protein DnaA, found in Corynebacterium glutamicum (strain R).